The chain runs to 149 residues: Evolved beta-galactosidase subunit beta (149 aa).

Heterooctamer of 4 alpha and 4 beta subunits.

Its function is as follows. Required for full activity of the EbgA enzyme. Exact function not known. The polypeptide is Evolved beta-galactosidase subunit beta (ebgC) (Escherichia coli O6:H1 (strain CFT073 / ATCC 700928 / UPEC)).